The chain runs to 469 residues: 3-isopropylmalate dehydratase large subunit (469 aa).

Residues C347, C407, and C410 each contribute to the [4Fe-4S] cluster site.

The protein belongs to the aconitase/IPM isomerase family. LeuC type 1 subfamily. Heterodimer of LeuC and LeuD. It depends on [4Fe-4S] cluster as a cofactor.

It carries out the reaction (2R,3S)-3-isopropylmalate = (2S)-2-isopropylmalate. It participates in amino-acid biosynthesis; L-leucine biosynthesis; L-leucine from 3-methyl-2-oxobutanoate: step 2/4. Functionally, catalyzes the isomerization between 2-isopropylmalate and 3-isopropylmalate, via the formation of 2-isopropylmaleate. This chain is 3-isopropylmalate dehydratase large subunit, found in Photorhabdus laumondii subsp. laumondii (strain DSM 15139 / CIP 105565 / TT01) (Photorhabdus luminescens subsp. laumondii).